The chain runs to 324 residues: MALTNRLLMNSSALLRSSTLPLAVTSSRQAHAAHNTVINFVPQQEAWVVERMGKFYKILEPGLNFLLPIIDKIKFVQNLREIAIEIPEQGAITIDNVQLRLDGVLYLRVFDPYKASYGVDDPEFAVTQLAQTTMRSEVGKINLDTVFKERELLNENIVFAINKASAPWGIQCMRYEIRDMQMPSKIQEAMQMQVEAERKKRAAILESEGIREAAINRAEGDKKSAILASEAVQAERINVAKGEAEAVILKAESRAKAIERIALALEKDGGANAAGLTVAEQYVGAFGNLAKESNTVVLPANLSDPGSMVSQALAVYDSLSNKKK.

This sequence belongs to the band 7/mec-2 family. In terms of tissue distribution, widely expressed in most tissues, including body wall muscles, intestinal epithelia, and pharynx and head neurons.

It is found in the mitochondrion. Its function is as follows. Mitochondrial protein that probably regulates the biogenesis and the activity of mitochondria. In neurons, involved in mitochondrial fusion and recovery of normal locomotory behavior during reoxygenation; probably acts independently of egl-9 and the canonical hypoxia response pathway. In Caenorhabditis elegans, this protein is Stomatin-like protein stl-1.